Here is a 292-residue protein sequence, read N- to C-terminus: Elongation factor Ts (292 aa).

An involved in Mg(2+) ion dislocation from EF-Tu region spans residues 79 to 82 (TDFV).

It belongs to the EF-Ts family.

The protein localises to the cytoplasm. Its function is as follows. Associates with the EF-Tu.GDP complex and induces the exchange of GDP to GTP. It remains bound to the aminoacyl-tRNA.EF-Tu.GTP complex up to the GTP hydrolysis stage on the ribosome. This is Elongation factor Ts from Metamycoplasma arthritidis (strain 158L3-1) (Mycoplasma arthritidis).